Reading from the N-terminus, the 245-residue chain is MLTSKNNFHKVAPFYEQNALIQKKMAERLMELVEKNVGCEFDDVLEIGCGTGLFTKLIQKKINYNRLFLNDLHNFISFEGGYDFLEGDIEEINLSDKFDIIFSNATFQWVKDFEQLIQKLYQSLKPQGYLCFTTFGEENLKEVKRITNVGLNYLTFNEYLDFLGRYFKIVAHYHTKECLYFQSPVDVLKHMKLTGVNSVEKVQWTKRDFVNFCESYEQFKTEEGYLLTYHPFYFIVSKNKEVCYD.

The protein belongs to the methyltransferase superfamily.

The enzyme catalyses malonyl-[ACP] + S-adenosyl-L-methionine = malonyl-[ACP] methyl ester + S-adenosyl-L-homocysteine. The protein operates within cofactor biosynthesis; biotin biosynthesis. In terms of biological role, converts the free carboxyl group of a malonyl-thioester to its methyl ester by transfer of a methyl group from S-adenosyl-L-methionine (SAM). It allows to synthesize pimeloyl-ACP via the fatty acid synthetic pathway. This is Malonyl-[acyl-carrier protein] O-methyltransferase from Calditerrivibrio nitroreducens (strain DSM 19672 / NBRC 101217 / Yu37-1).